A 515-amino-acid chain; its full sequence is 2-isopropylmalate synthase (515 aa).

The region spanning 5 to 267 is the Pyruvate carboxyltransferase domain; the sequence is VIIFDTTLRD…DTHINTQEIH (263 aa). 4 residues coordinate Mn(2+): Asp14, His202, His204, and Asn238. The regulatory domain stretch occupies residues 392-515; that stretch reads VLDKLSAHST…VADIKNHKHH (124 aa).

Belongs to the alpha-IPM synthase/homocitrate synthase family. LeuA type 1 subfamily. As to quaternary structure, homodimer. Mn(2+) is required as a cofactor.

The protein localises to the cytoplasm. It catalyses the reaction 3-methyl-2-oxobutanoate + acetyl-CoA + H2O = (2S)-2-isopropylmalate + CoA + H(+). It functions in the pathway amino-acid biosynthesis; L-leucine biosynthesis; L-leucine from 3-methyl-2-oxobutanoate: step 1/4. In terms of biological role, catalyzes the condensation of the acetyl group of acetyl-CoA with 3-methyl-2-oxobutanoate (2-ketoisovalerate) to form 3-carboxy-3-hydroxy-4-methylpentanoate (2-isopropylmalate). The protein is 2-isopropylmalate synthase of Haemophilus influenzae (strain ATCC 51907 / DSM 11121 / KW20 / Rd).